We begin with the raw amino-acid sequence, 145 residues long: uncharacterized protein (145 aa).

Residues 1 to 41 (MEQHYHQQNQLRQLKQQQLKELLQQQSKDKEEDEQKHDDYR) adopt a coiled-coil conformation. The tract at residues 1–91 (MEQHYHQQNQ…LQISEPEGES (91 aa)) is disordered. Low complexity predominate over residues 7–26 (QQNQLRQLKQQQLKELLQQQ). Over residues 27–42 (SKDKEEDEQKHDDYRS) the composition is skewed to basic and acidic residues. Residues 43–58 (PTKTTTTTATSTSAAT) are compositionally biased toward low complexity.

This is an uncharacterized protein from Dictyostelium discoideum (Social amoeba).